Here is a 159-residue protein sequence, read N- to C-terminus: Ribosomal RNA large subunit methyltransferase H (159 aa).

S-adenosyl-L-methionine contacts are provided by residues L76, G108, and 127–132 (FSKMTF).

It belongs to the RNA methyltransferase RlmH family. In terms of assembly, homodimer.

It localises to the cytoplasm. The catalysed reaction is pseudouridine(1915) in 23S rRNA + S-adenosyl-L-methionine = N(3)-methylpseudouridine(1915) in 23S rRNA + S-adenosyl-L-homocysteine + H(+). Specifically methylates the pseudouridine at position 1915 (m3Psi1915) in 23S rRNA. The chain is Ribosomal RNA large subunit methyltransferase H from Bifidobacterium longum subsp. infantis (strain ATCC 15697 / DSM 20088 / JCM 1222 / NCTC 11817 / S12).